Here is a 503-residue protein sequence, read N- to C-terminus: Aromatase (503 aa).

The next 3 helical transmembrane spans lie at 19 to 39 (EVMPVATMPILLLTGFLLLVW), 51 to 71 (GYCMGIGPLISHCRFLWMGIG), and 303 to 323 (MLIAAPDTMSVSVFFMLFLIA). The substrate site is built by Asp-309 and Met-374. Cys-437 contacts heme.

This sequence belongs to the cytochrome P450 family. The cofactor is heme.

The protein resides in the endoplasmic reticulum membrane. It localises to the microsome membrane. The catalysed reaction is testosterone + 3 reduced [NADPH--hemoprotein reductase] + 3 O2 = 17beta-estradiol + formate + 3 oxidized [NADPH--hemoprotein reductase] + 4 H2O + 4 H(+). It catalyses the reaction androst-4-ene-3,17-dione + 3 reduced [NADPH--hemoprotein reductase] + 3 O2 = estrone + formate + 3 oxidized [NADPH--hemoprotein reductase] + 4 H2O + 4 H(+). The enzyme catalyses androst-4-ene-3,17-dione + reduced [NADPH--hemoprotein reductase] + O2 = 19-hydroxyandrost-4-ene-3,17-dione + oxidized [NADPH--hemoprotein reductase] + H2O + H(+). It carries out the reaction 19-hydroxyandrost-4-ene-3,17-dione + reduced [NADPH--hemoprotein reductase] + O2 = 19-oxo-androst-4-ene-3,17-dione + oxidized [NADPH--hemoprotein reductase] + 2 H2O + H(+). The catalysed reaction is 19-oxo-androst-4-ene-3,17-dione + reduced [NADPH--hemoprotein reductase] + O2 = estrone + formate + oxidized [NADPH--hemoprotein reductase] + H2O + 2 H(+). It catalyses the reaction estrone + reduced [NADPH--hemoprotein reductase] + O2 = 2-hydroxyestrone + oxidized [NADPH--hemoprotein reductase] + H2O + H(+). The enzyme catalyses 17beta-hydroxy-5alpha-androstan-3-one + reduced [NADPH--hemoprotein reductase] + O2 = 17beta,19-dihydroxy-3-oxo-5alpha-androstanone + oxidized [NADPH--hemoprotein reductase] + H2O + H(+). It carries out the reaction 17beta,19-dihydroxy-3-oxo-5alpha-androstanone + reduced [NADPH--hemoprotein reductase] + O2 = 17beta-hydroxy-3,19-dioxo-5alpha-androstanone + oxidized [NADPH--hemoprotein reductase] + 2 H2O + H(+). The catalysed reaction is 17beta-hydroxy-3,19-dioxo-5alpha-androstanone + reduced [NADPH--hemoprotein reductase] + O2 = 17beta-hydroxy-3-oxo-19-nor-5alpha-androst-1-ene + formate + oxidized [NADPH--hemoprotein reductase] + H2O + 2 H(+). The protein operates within steroid hormone biosynthesis. A cytochrome P450 monooxygenase that catalyzes the conversion of C19 androgens, androst-4-ene-3,17-dione (androstenedione) and testosterone to the C18 estrogens, estrone and estradiol, respectively. Catalyzes three successive oxidations of C19 androgens: two conventional oxidations at C19 yielding 19-hydroxy and 19-oxo/19-aldehyde derivatives, followed by a third oxidative aromatization step that involves C1-beta hydrogen abstraction combined with cleavage of the C10-C19 bond to yield a phenolic A ring and formic acid. Alternatively, the third oxidative reaction yields a 19-norsteroid and formic acid. Converts dihydrotestosterone to delta1,10-dehydro 19-nordihydrotestosterone and may play a role in homeostasis of this potent androgen. Also displays 2-hydroxylase activity toward estrone. Mechanistically, uses molecular oxygen inserting one oxygen atom into a substrate, and reducing the second into a water molecule, with two electrons provided by NADPH via cytochrome P450 reductase (CPR; NADPH-ferrihemoprotein reductase). This chain is Aromatase (CYP19A1), found in Canis lupus familiaris (Dog).